Reading from the N-terminus, the 115-residue chain is NADH-ubiquinone oxidoreductase chain 3 (115 aa).

The next 3 helical transmembrane spans lie at 5–25, 55–75, and 86–106; these read LTLM…FWLP, FFLV…LLPL, and LMLT…AYEW.

This sequence belongs to the complex I subunit 3 family. As to quaternary structure, core subunit of respiratory chain NADH dehydrogenase (Complex I) which is composed of 45 different subunits. Interacts with TMEM186. Interacts with TMEM242.

It is found in the mitochondrion inner membrane. The enzyme catalyses a ubiquinone + NADH + 5 H(+)(in) = a ubiquinol + NAD(+) + 4 H(+)(out). Functionally, core subunit of the mitochondrial membrane respiratory chain NADH dehydrogenase (Complex I) which catalyzes electron transfer from NADH through the respiratory chain, using ubiquinone as an electron acceptor. Essential for the catalytic activity of complex I. This is NADH-ubiquinone oxidoreductase chain 3 from Avahi cleesei (Cleese's woolly lemur).